The primary structure comprises 167 residues: uncharacterized protein (167 aa).

The next 2 helical transmembrane spans lie at Lys21–Pro41 and Met87–Gly107. Positions Arg136–Thr159 are enriched in basic and acidic residues. Residues Arg136–Leu167 are disordered.

The protein localises to the membrane. This is an uncharacterized protein from Schizosaccharomyces pombe (strain 972 / ATCC 24843) (Fission yeast).